A 66-amino-acid polypeptide reads, in one-letter code: DNA-directed RNA polymerase subunit Rpo10 (66 aa).

The Zn(2+) site is built by Cys-7, Cys-10, Cys-44, and Cys-45.

This sequence belongs to the archaeal Rpo10/eukaryotic RPB10 RNA polymerase subunit family. As to quaternary structure, part of the RNA polymerase complex. The cofactor is Zn(2+).

The protein resides in the cytoplasm. The enzyme catalyses RNA(n) + a ribonucleoside 5'-triphosphate = RNA(n+1) + diphosphate. DNA-dependent RNA polymerase (RNAP) catalyzes the transcription of DNA into RNA using the four ribonucleoside triphosphates as substrates. This is DNA-directed RNA polymerase subunit Rpo10 from Pyrobaculum aerophilum (strain ATCC 51768 / DSM 7523 / JCM 9630 / CIP 104966 / NBRC 100827 / IM2).